Consider the following 1703-residue polypeptide: Arf-GAP with Rho-GAP domain, ANK repeat and PH domain-containing protein 2 (1703 aa).

Positions 6 to 70 constitute an SAM domain; it reads EVNADIRDFL…LKQLQMIFSK (65 aa). A Phosphotyrosine modification is found at tyrosine 77. 3 disordered regions span residues 84 to 132, 191 to 232, and 286 to 319; these read KNGS…LSEG, EEHT…NGTN, and PVPE…LTLK. Composition is skewed to polar residues over residues 85-103, 123-132, and 197-214; these read NGST…STHT, MVTTSTLSEG, and GNLT…NTEC. The span at 222-232 shows a compositional bias: low complexity; that stretch reads TSGTHSGNGTN. The span at 308–319 shows a compositional bias: polar residues; that stretch reads NTTSAGKSLTLK. 2 PH domains span residues 480–572 and 585–677; these read AKEK…SALK and APEK…QSIA. An Arf-GAP domain is found at 674–809; sequence QSIAETLSDY…TLLASLTKEE (136 aa). Residues 698-721 form a C4-type zinc finger; the sequence is CADCKAPDPDWASINLCVVICKKC. 2 PH domains span residues 899–1001 and 1012–1110; these read QTAA…KRFV and DYDL…KAAG. In terms of domain architecture, Rho-GAP spans 1114–1295; it reads NALQDQQLCK…DLINNYVEIF (182 aa). Residues 1324–1418 enclose the Ras-associating domain; the sequence is GDLLIEVFVE…AYLVVKRFLT (95 aa). The PH 5 domain occupies 1428–1531; the sequence is KSIKEGILKL…WMASIFIAQH (104 aa). A Phosphoserine modification is found at serine 1627. 2 disordered regions span residues 1633–1670 and 1684–1703; these read DTEA…DPKL and RSRP…KEVK. Basic and acidic residues-rich tracts occupy residues 1653–1670 and 1688–1703; these read KKTE…DPKL and LHKE…KEVK.

The protein resides in the cytoplasm. Phosphatidylinositol 3,4,5-trisphosphate-dependent GTPase-activating protein that modulates actin cytoskeleton remodeling by regulating ARF and RHO family members. Is activated by phosphatidylinositol 3,4,5-trisphosphate (PtdIns(3,4,5)P3) binding. Can be activated by phosphatidylinositol 3,4-bisphosphate (PtdIns(3,4,5)P2) binding, albeit with lower efficiency. The protein is Arf-GAP with Rho-GAP domain, ANK repeat and PH domain-containing protein 2 (Arap2) of Mus musculus (Mouse).